Here is a 143-residue protein sequence, read N- to C-terminus: Large ribosomal subunit protein bL17 (143 aa).

The protein belongs to the bacterial ribosomal protein bL17 family. In terms of assembly, part of the 50S ribosomal subunit. Contacts protein L32.

The chain is Large ribosomal subunit protein bL17 from Chelativorans sp. (strain BNC1).